We begin with the raw amino-acid sequence, 137 residues long: Nucleoside diphosphate kinase (137 aa).

6 residues coordinate ATP: K9, F57, R85, T91, R102, and N112. H115 functions as the Pros-phosphohistidine intermediate in the catalytic mechanism.

It belongs to the NDK family. In terms of assembly, homotetramer. The cofactor is Mg(2+).

The protein localises to the cytoplasm. It carries out the reaction a 2'-deoxyribonucleoside 5'-diphosphate + ATP = a 2'-deoxyribonucleoside 5'-triphosphate + ADP. It catalyses the reaction a ribonucleoside 5'-diphosphate + ATP = a ribonucleoside 5'-triphosphate + ADP. Functionally, major role in the synthesis of nucleoside triphosphates other than ATP. The ATP gamma phosphate is transferred to the NDP beta phosphate via a ping-pong mechanism, using a phosphorylated active-site intermediate. This Pelobacter propionicus (strain DSM 2379 / NBRC 103807 / OttBd1) protein is Nucleoside diphosphate kinase.